The chain runs to 79 residues: MSITIWILLIIVALFGGLVGGIFIARKQIEKEIGEHPRLTPDAIREMMSQMGQKPSEAKVQQTYRNIVKHAKTAIKTKK.

The chain crosses the membrane as a helical span at residues 5–25 (IWILLIIVALFGGLVGGIFIA).

The protein belongs to the UPF0154 family.

The protein resides in the membrane. This Streptococcus agalactiae serotype V (strain ATCC BAA-611 / 2603 V/R) protein is UPF0154 protein SAG1601.